A 376-amino-acid polypeptide reads, in one-letter code: Dual-specificity RNA methyltransferase RlmN (376 aa).

Glu-95 (proton acceptor) is an active-site residue. The Radical SAM core domain maps to 101-339; the sequence is EKERATLCVS…CIVRRPRGDD (239 aa). An intrachain disulfide couples Cys-108 to Cys-344. [4Fe-4S] cluster-binding residues include Cys-115, Cys-119, and Cys-122. S-adenosyl-L-methionine-binding positions include 169–170, Ser-201, 223–225, and Asn-301; these read GE and SLH. Catalysis depends on Cys-344, which acts as the S-methylcysteine intermediate.

It belongs to the radical SAM superfamily. RlmN family. The cofactor is [4Fe-4S] cluster.

The protein resides in the cytoplasm. The enzyme catalyses adenosine(2503) in 23S rRNA + 2 reduced [2Fe-2S]-[ferredoxin] + 2 S-adenosyl-L-methionine = 2-methyladenosine(2503) in 23S rRNA + 5'-deoxyadenosine + L-methionine + 2 oxidized [2Fe-2S]-[ferredoxin] + S-adenosyl-L-homocysteine. It catalyses the reaction adenosine(37) in tRNA + 2 reduced [2Fe-2S]-[ferredoxin] + 2 S-adenosyl-L-methionine = 2-methyladenosine(37) in tRNA + 5'-deoxyadenosine + L-methionine + 2 oxidized [2Fe-2S]-[ferredoxin] + S-adenosyl-L-homocysteine. Specifically methylates position 2 of adenine 2503 in 23S rRNA and position 2 of adenine 37 in tRNAs. m2A2503 modification seems to play a crucial role in the proofreading step occurring at the peptidyl transferase center and thus would serve to optimize ribosomal fidelity. The chain is Dual-specificity RNA methyltransferase RlmN from Pseudoalteromonas translucida (strain TAC 125).